Reading from the N-terminus, the 563-residue chain is Beta-catenin-like protein 1 (563 aa).

An N-acetylmethionine modification is found at M1. The interval 1–81 (MDVGELLSYQ…EEEEPLDESS (81 aa)) is disordered. The short motif at 16–33 (KRPRDDEEEELKTRRKQT) is the Nuclear localization signal element. The segment covering 34–45 (GPRERGRYREEE) has biased composition (basic and acidic residues). Positions 66 to 78 (DGEEEEEEEEPLD) are enriched in acidic residues. HEAT repeat units lie at residues 79–129 (ESSV…VVAT) and 134–176 (YHLL…TLHE). Position 91 is an N6-acetyllysine (K91). The Nuclear export signal (NES) signature appears at 130-140 (MPDLYHLLVEL). ARM repeat units follow at residues 178–228 (EEGA…MAEF), 229–273 (RPEM…LQDN), 274–323 (DENR…CLML), 325–363 (SNRE…AMIG), and 364–417 (PEGT…LLRN). Residue S389 is modified to Phosphoserine. A coiled-coil region spans residues 476 to 540 (DMEDEFYLRR…HIIKEYAENI (65 aa)). S545 is subject to Phosphoserine.

In terms of assembly, component of the PRP19-CDC5L splicing complex composed of a core complex comprising a homotetramer of PRPF19, CDC5L, PLRG1 and BCAS2, and at least three less stably associated proteins CTNNBL1, CWC15 and HSPA8. Interacts directly with CWC15 and CDC5L in the complex. Interacts with AICDA; the interaction is important for the antibody diversification activity of AICDA. Interacts with PRPF31 (via its NLS). Interacts (via its N-terminal NLS) with KPNA1 and KPNA2.

It localises to the nucleus. Its function is as follows. Component of the PRP19-CDC5L complex that forms an integral part of the spliceosome and is required for activating pre-mRNA splicing. Participates in AID/AICDA-mediated somatic hypermutation (SHM) and class-switch recombination (CSR), 2 processes resulting in the production of high-affinity, mutated isotype-switched antibodies. The chain is Beta-catenin-like protein 1 (Ctnnbl1) from Mus musculus (Mouse).